Consider the following 179-residue polypeptide: Large ribosomal subunit protein uL5 (179 aa).

The residue at position 3 (Lys3) is an N6-acetyllysine.

The protein belongs to the universal ribosomal protein uL5 family. Part of the 50S ribosomal subunit; part of the 5S rRNA/L5/L18/L25 subcomplex. Contacts the 5S rRNA and the P site tRNA. Forms a bridge to the 30S subunit in the 70S ribosome.

Functionally, this is one of the proteins that bind and probably mediate the attachment of the 5S RNA into the large ribosomal subunit, where it forms part of the central protuberance. In the 70S ribosome it contacts protein S13 of the 30S subunit (bridge B1b), connecting the 2 subunits; this bridge is implicated in subunit movement. Contacts the P site tRNA; the 5S rRNA and some of its associated proteins might help stabilize positioning of ribosome-bound tRNAs. In Shigella flexneri, this protein is Large ribosomal subunit protein uL5.